The sequence spans 64 residues: Large ribosomal subunit protein bL35 (64 aa).

The protein belongs to the bacterial ribosomal protein bL35 family.

This Shewanella halifaxensis (strain HAW-EB4) protein is Large ribosomal subunit protein bL35.